We begin with the raw amino-acid sequence, 431 residues long: MESWQAPDLKRLGGQAVPLRLYDTARQAVHATEPHPDGARMYVCGITPYDATHLGHAATMVTFDVINRVWRDNGHDVAYVQNVTDVDEPLFERAERDGEDWVVLGMRETALFREDMEALSIIPPKAYVGAVESMPTIAALVERLVDAGAAYTVDDGTGDVYFPVTATEGFGSESHYDRDTMLRFFGERGGDPDRSGKRDPLDALLWRGEREGEPSWESRLGRGRPGWHIECAAIALAHLGDRIDVNGGGNDLIFPHHEFSAAHAEAATKAVPFAKHYVHAGMIGLDGEKMSKSRGNLVFVSRLRADGVDPAVIRLALLDGHYREDRPWTAELHAAAADRLARWREAMGMSSGASGTTTAQRVRERLSDDLDTPGALRAVDEWAAASLTGAHHDAHAPALVRDTVESLLGVTLLRAVFRQRTTSATTLDRSR.

Cysteine 44 serves as a coordination point for Zn(2+). L-cysteinyl-5'-AMP contacts are provided by residues 44–47 (CGIT), threonine 59, and 82–84 (NVT). The 'HIGH' region signature appears at 46–56 (ITPYDATHLGH). A 'ERGGDP' region motif is present at residues 187-192 (ERGGDP). Position 227 (tryptophan 227) interacts with L-cysteinyl-5'-AMP. Cysteine 231 provides a ligand contact to Zn(2+). 249 to 251 (GND) serves as a coordination point for L-cysteinyl-5'-AMP. Zn(2+) is bound at residue histidine 256. Isoleucine 283 serves as a coordination point for L-cysteinyl-5'-AMP. The short motif at 289–293 (KMSKS) is the 'KMSKS' region element.

It belongs to the class-I aminoacyl-tRNA synthetase family. MshC subfamily. Monomer. The cofactor is Zn(2+).

The enzyme catalyses 1D-myo-inositol 2-amino-2-deoxy-alpha-D-glucopyranoside + L-cysteine + ATP = 1D-myo-inositol 2-(L-cysteinylamino)-2-deoxy-alpha-D-glucopyranoside + AMP + diphosphate + H(+). Functionally, catalyzes the ATP-dependent condensation of GlcN-Ins and L-cysteine to form L-Cys-GlcN-Ins. The chain is L-cysteine:1D-myo-inositol 2-amino-2-deoxy-alpha-D-glucopyranoside ligase from Stackebrandtia nassauensis (strain DSM 44728 / CIP 108903 / NRRL B-16338 / NBRC 102104 / LLR-40K-21).